The sequence spans 1044 residues: Isoleucine--tRNA ligase (1044 aa).

Positions 48–58 (PFATGLPHFGH) match the 'HIGH' region motif. The short motif at 594-598 (KMSKS) is the 'KMSKS' region element. Residue K597 participates in ATP binding.

Belongs to the class-I aminoacyl-tRNA synthetase family. IleS type 2 subfamily. Monomer. The cofactor is Zn(2+).

It localises to the cytoplasm. The enzyme catalyses tRNA(Ile) + L-isoleucine + ATP = L-isoleucyl-tRNA(Ile) + AMP + diphosphate. In terms of biological role, catalyzes the attachment of isoleucine to tRNA(Ile). As IleRS can inadvertently accommodate and process structurally similar amino acids such as valine, to avoid such errors it has two additional distinct tRNA(Ile)-dependent editing activities. One activity is designated as 'pretransfer' editing and involves the hydrolysis of activated Val-AMP. The other activity is designated 'posttransfer' editing and involves deacylation of mischarged Val-tRNA(Ile). This is Isoleucine--tRNA ligase from Borrelia recurrentis (strain A1).